The sequence spans 337 residues: Heat-inducible transcription repressor HrcA (337 aa).

The protein belongs to the HrcA family.

Its function is as follows. Negative regulator of class I heat shock genes (grpE-dnaK-dnaJ and groELS operons). Prevents heat-shock induction of these operons. The protein is Heat-inducible transcription repressor HrcA of Metamycoplasma arthritidis (strain 158L3-1) (Mycoplasma arthritidis).